Here is a 375-residue protein sequence, read N- to C-terminus: MSYLFNNYKRDNIEFVDANQNELIDKDNNVYLDFSSGIGVTNLGFNMEIYQAVYNQLNLIWHSPNLYLSSIQEEVAQKLIGQRDYLAFFCNSGTEANEAAIKLARKATGKSEIIAFKKSFHGRTYGAMSATGQKKITDQFGPVVPGFKFAIFNDFNSFKSLTSNNTAAVIIEIIQGESGVLPADSLFMKQLNEYCKQKDILIIVDEVQTGIGRTGKLYAHEHYQLSPDIITLAKGLGNGLPIGAMLGKKNLGHAFGYGSHGTTFGGNRLSLAAANQTLSIINDADLLNDVQSKGQFLIENLRKSLVNKRNVIEVRGVGLMVGIEVTNDPSQVVREAKRMGLIILTAGKNVIRLLPPLTITKKQLEKGIEILTEII.

Residues 93–94 (GT) and Phe120 each bind pyridoxal 5'-phosphate. Residue Arg123 participates in N(2)-acetyl-L-ornithine binding. 205-208 (DEVQ) serves as a coordination point for pyridoxal 5'-phosphate. Position 234 is an N6-(pyridoxal phosphate)lysine (Lys234). Thr262 contributes to the N(2)-acetyl-L-ornithine binding site. Residue Thr263 coordinates pyridoxal 5'-phosphate.

This sequence belongs to the class-III pyridoxal-phosphate-dependent aminotransferase family. ArgD subfamily. Homodimer. Pyridoxal 5'-phosphate serves as cofactor.

Its subcellular location is the cytoplasm. The enzyme catalyses N(2)-acetyl-L-ornithine + 2-oxoglutarate = N-acetyl-L-glutamate 5-semialdehyde + L-glutamate. The protein operates within amino-acid biosynthesis; L-arginine biosynthesis; N(2)-acetyl-L-ornithine from L-glutamate: step 4/4. The chain is Acetylornithine aminotransferase from Staphylococcus epidermidis (strain ATCC 35984 / DSM 28319 / BCRC 17069 / CCUG 31568 / BM 3577 / RP62A).